The following is a 361-amino-acid chain: Chorismate synthase (361 aa).

NADP(+) is bound by residues Arg48 and Arg54. Residues 125–127 (RSS), 238–239 (NA), Gly278, 293–297 (KPTSS), and Arg319 contribute to the FMN site.

The protein belongs to the chorismate synthase family. Homotetramer. It depends on FMNH2 as a cofactor.

It catalyses the reaction 5-O-(1-carboxyvinyl)-3-phosphoshikimate = chorismate + phosphate. It participates in metabolic intermediate biosynthesis; chorismate biosynthesis; chorismate from D-erythrose 4-phosphate and phosphoenolpyruvate: step 7/7. Its function is as follows. Catalyzes the anti-1,4-elimination of the C-3 phosphate and the C-6 proR hydrogen from 5-enolpyruvylshikimate-3-phosphate (EPSP) to yield chorismate, which is the branch point compound that serves as the starting substrate for the three terminal pathways of aromatic amino acid biosynthesis. This reaction introduces a second double bond into the aromatic ring system. This is Chorismate synthase from Escherichia coli O7:K1 (strain IAI39 / ExPEC).